A 235-amino-acid chain; its full sequence is Triosephosphate isomerase (235 aa).

Position 7–9 (7–9 (NFK)) interacts with substrate. Histidine 92 serves as the catalytic Electrophile. Catalysis depends on glutamate 161, which acts as the Proton acceptor. The substrate site is built by glycine 167 and serine 197.

The protein belongs to the triosephosphate isomerase family. As to quaternary structure, homodimer.

The protein localises to the cytoplasm. The catalysed reaction is D-glyceraldehyde 3-phosphate = dihydroxyacetone phosphate. It participates in carbohydrate biosynthesis; gluconeogenesis. The protein operates within carbohydrate degradation; glycolysis; D-glyceraldehyde 3-phosphate from glycerone phosphate: step 1/1. Involved in the gluconeogenesis. Catalyzes stereospecifically the conversion of dihydroxyacetone phosphate (DHAP) to D-glyceraldehyde-3-phosphate (G3P). In Helicobacter hepaticus (strain ATCC 51449 / 3B1), this protein is Triosephosphate isomerase.